Consider the following 301-residue polypeptide: NAD kinase (301 aa).

The active-site Proton acceptor is aspartate 84. NAD(+)-binding positions include 84-85 (DG), arginine 89, 158-159 (NE), lysine 169, asparagine 188, 199-204 (TAYSFS), and glutamine 258.

This sequence belongs to the NAD kinase family. A divalent metal cation is required as a cofactor.

Its subcellular location is the cytoplasm. It carries out the reaction NAD(+) + ATP = ADP + NADP(+) + H(+). In terms of biological role, involved in the regulation of the intracellular balance of NAD and NADP, and is a key enzyme in the biosynthesis of NADP. Catalyzes specifically the phosphorylation on 2'-hydroxyl of the adenosine moiety of NAD to yield NADP. This is NAD kinase from Tropheryma whipplei (strain Twist) (Whipple's bacillus).